The chain runs to 492 residues: uncharacterized protein (492 aa).

266 to 273 serves as a coordination point for ATP; sequence GIQGTGKS.

The protein belongs to the AAA ATPase family. Highly divergent.

It is found in the plastid. It localises to the chloroplast. This is an uncharacterized protein from Pyropia yezoensis (Susabi-nori).